Here is a 414-residue protein sequence, read N- to C-terminus: Histidinol dehydrogenase (414 aa).

Tyr-116, Gln-177, and Asn-200 together coordinate NAD(+). The substrate site is built by Thr-223, Gln-245, and His-248. 2 residues coordinate Zn(2+): Gln-245 and His-248. Residues Glu-313 and His-314 each act as proton acceptor in the active site. 4 residues coordinate substrate: His-314, Asp-347, Glu-401, and His-406. Asp-347 contributes to the Zn(2+) binding site. Residue His-406 coordinates Zn(2+).

The protein belongs to the histidinol dehydrogenase family. Zn(2+) serves as cofactor.

The catalysed reaction is L-histidinol + 2 NAD(+) + H2O = L-histidine + 2 NADH + 3 H(+). The protein operates within amino-acid biosynthesis; L-histidine biosynthesis; L-histidine from 5-phospho-alpha-D-ribose 1-diphosphate: step 9/9. In terms of biological role, catalyzes the sequential NAD-dependent oxidations of L-histidinol to L-histidinaldehyde and then to L-histidine. The protein is Histidinol dehydrogenase of Staphylococcus epidermidis (strain ATCC 12228 / FDA PCI 1200).